A 263-amino-acid chain; its full sequence is Peptidoglycan-N-acetylmuramic acid deacetylase PdaA (263 aa).

The signal sequence occupies residues 1 to 23 (MKWMCSICCAAVLLAGGAAQAEA). The NodB homology domain occupies 66 to 247 (KTIYLTFDNG…DLKKQGYTFK (182 aa)). Aspartate 73 serves as the catalytic Proton acceptor. 2 residues coordinate a divalent metal cation: histidine 124 and histidine 128. Histidine 222 (proton donor) is an active-site residue.

Belongs to the polysaccharide deacetylase family.

In terms of biological role, catalyzes the deacetylation of N-acetylmuramic acid (MurNAc) residues in glycan strands of peptidoglycan, leading to the formation of muramic delta-lactam residues in spore cortex, after transpeptidation of deacetylated muramic acid residues. PdaA probably carries out both deacetylation and lactam ring formation and requires the product of CwlD activity on peptidoglycan as a substrate. Is required for germination. Cannot use chitin oligomer (hexa-N-acetylchitohexaose) as a substrate. This is Peptidoglycan-N-acetylmuramic acid deacetylase PdaA (pdaA) from Bacillus subtilis (strain 168).